Here is a 335-residue protein sequence, read N- to C-terminus: 34 kDa spicule matrix protein (335 aa).

A signal peptide spans 1 to 17 (MKGLLLILASLVAIATG). A C-type lectin domain is found at 29–194 (SGASCYRYFN…ATAMRAFVCE (166 aa)). A disulfide bridge links Cys-50 with Cys-193. The tract at residues 199-335 (QNIPPGQQPG…QEAETDVTGS (137 aa)) is disordered. A compositionally biased stretch (gly residues) spans 207-310 (PGFGGQQPGF…GGPQRPGMGG (104 aa)). A compositionally biased stretch (low complexity) spans 311–323 (QPNSPNPRFNRPR).

It belongs to the SM50 family. As to expression, embryo spicule.

It localises to the secreted. Major matrix protein of the sea urchin embryo spicule which directs crystal growth in certain orientations and inhibit growth in others. This Lytechinus pictus (Painted sea urchin) protein is 34 kDa spicule matrix protein.